We begin with the raw amino-acid sequence, 360 residues long: 3-isopropylmalate dehydrogenase (360 aa).

The span at arginine 66–arginine 75 shows a compositional bias: basic residues. The disordered stretch occupies residues arginine 66–valine 101. Arginine 133 and aspartate 223 together coordinate substrate. The Mg(2+) site is built by aspartate 223, aspartate 247, and aspartate 251.

The protein belongs to the isocitrate and isopropylmalate dehydrogenases family. LeuB type 1 subfamily. As to quaternary structure, homodimer. Mg(2+) is required as a cofactor. Mn(2+) serves as cofactor.

It localises to the cytoplasm. The enzyme catalyses (2R,3S)-3-isopropylmalate + NAD(+) = 4-methyl-2-oxopentanoate + CO2 + NADH. The protein operates within amino-acid biosynthesis; L-leucine biosynthesis; L-leucine from 3-methyl-2-oxobutanoate: step 3/4. Functionally, catalyzes the oxidation of 3-carboxy-2-hydroxy-4-methylpentanoate (3-isopropylmalate) to 3-carboxy-4-methyl-2-oxopentanoate. The product decarboxylates to 4-methyl-2 oxopentanoate. The protein is 3-isopropylmalate dehydrogenase (leuB) of Azotobacter vinelandii.